The primary structure comprises 147 residues: UPF0251 protein CTC_01373 (147 aa).

This sequence belongs to the UPF0251 family.

The chain is UPF0251 protein CTC_01373 from Clostridium tetani (strain Massachusetts / E88).